Reading from the N-terminus, the 279-residue chain is RxLR effector protein Avh331 (279 aa).

The first 20 residues, 1–20, serve as a signal peptide directing secretion; the sequence is MMQWSAILIRTCFSGSGGEA. A RxLR-dEER motif is present at residues 86–106; the sequence is RSLRSQATNVDDDANVSIENR. An N-linked (GlcNAc...) asparagine glycan is attached at Asn100. A W1 motif region spans residues 129 to 147; it reads ANKLWLMADVDPKSAFKLL. Positions 153–174 are Y1 motif; the sequence is GVRFIDNPKMLQWLKFTKAYLD. The segment at 178–208 is l motif; that stretch reads SGFGETSAHALLYEKIGGPDLSLLLLSLKDA. Positions 222-240 are W2 motif; it reads QFGMWHDARIEPEQLAQTV. A Y2 motif region spans residues 250 to 271; the sequence is PKNDPKLQVIDDYAKYHRKHRK.

Belongs to the RxLR effector family.

Its subcellular location is the secreted. The protein localises to the host cell. Its function is as follows. Effector that suppresses the host mitogen-activated protein kinase (MAPK)-based plant defense activated by the Phytophthora elicitor to promote colonization of the Phytophthora pathogen. Neither directly inhibits MAPK kinase activity nor interacts with MAPK proteins but acts downstream by suppressing transcriptional activation of resistance marker genes such as FRK1, WRKY22 and WRKY29. Confers avirulence in the presence of resistance protein Rps1k in host. The chain is RxLR effector protein Avh331 from Phytophthora sojae (strain P6497) (Soybean stem and root rot agent).